Reading from the N-terminus, the 236-residue chain is Small ribosomal subunit protein uS2c (236 aa).

Belongs to the universal ribosomal protein uS2 family.

The protein localises to the plastid. The protein resides in the chloroplast. The sequence is that of Small ribosomal subunit protein uS2c (rps2) from Lepidium virginicum (Virginia pepperweed).